A 451-amino-acid chain; its full sequence is MMISQFFVLSQRGDNIVFRDYRAEVPKGSTETFFRKVKFWKEDGNAEAPPIFNVDGVNYFHVKVVGLYFVATTRVNVSPSLVLELLQRIARVIKDYLGVLNEDSFRKNFVLVYELLDEVIDFGYVQTTSTEVLKSYIFNEPIVVSPARLQPIDPAAIFTQGAKRMPGTAVTKSVVANDPGGRRREEIFVDIIEKISVTFSSSGYILTSEIDGTIQMKSYLSGNPEIRLALNEDLNIGRGGRSVYDYRSSSGSGVILDDCNFHESVRLDSFDSDRTLSLVPPDGEFPVMNYRMTQEFKPPFHVNTLIEEAGRLKAEVIIKIRAEFPSDIIANTITVQMPLPNYTSRASFELEPGAAGQRTDFKESNKMLEWNLKKIVGGGEHTLRAKLTFSQEFHGNITKEAGPVSMTFTIPMYNVSKLQVKYLQIAKKSSSYNPYRWVRYVTQANSYVARI.

The 267-residue stretch at Arg184–Arg450 folds into the MHD domain.

The protein belongs to the adaptor complexes medium subunit family. In terms of assembly, adaptor protein complex 4 (AP-4) is a heterotetramer composed of two large adaptins (epsilon-type subunit and beta-type subunit), a medium adaptin (mu-type subunit) and a small adaptin (sigma-type subunit).

It is found in the golgi apparatus. The protein resides in the trans-Golgi network. It localises to the membrane. Its subcellular location is the coated pit. Functionally, subunit of novel type of clathrin- or non-clathrin-associated protein coat involved in targeting proteins from the trans-Golgi network (TGN) to the endosomal-lysosomal system. The protein is AP-4 complex subunit mu (AP4M) of Arabidopsis thaliana (Mouse-ear cress).